A 243-amino-acid polypeptide reads, in one-letter code: Isoprenyl transferase 2 (243 aa).

D23 is an active-site residue. D23 contributes to the Mg(2+) binding site. Residues 24–27, W28, R36, H40, and 68–70 each bind substrate; these read GNGR and STE. The Proton acceptor role is filled by N71. Residues W72, R74, R191, and 197-199 each bind substrate; that span reads RTS. Residue E210 coordinates Mg(2+).

This sequence belongs to the UPP synthase family. Homodimer. Requires Mg(2+) as cofactor.

Functionally, catalyzes the condensation of isopentenyl diphosphate (IPP) with allylic pyrophosphates generating different type of terpenoids. The sequence is that of Isoprenyl transferase 2 from Corynebacterium efficiens (strain DSM 44549 / YS-314 / AJ 12310 / JCM 11189 / NBRC 100395).